An 878-amino-acid polypeptide reads, in one-letter code: DNA mismatch repair protein MutS (878 aa).

629–636 (GPNMAGKS) lines the ATP pocket.

This sequence belongs to the DNA mismatch repair MutS family.

In terms of biological role, this protein is involved in the repair of mismatches in DNA. It is possible that it carries out the mismatch recognition step. This protein has a weak ATPase activity. The polypeptide is DNA mismatch repair protein MutS (Roseobacter denitrificans (strain ATCC 33942 / OCh 114) (Erythrobacter sp. (strain OCh 114))).